The sequence spans 784 residues: 5-methyltetrahydropteroyltriglutamate--homocysteine methyltransferase (784 aa).

Residues 16–19 (RELK) and lysine 112 contribute to the 5-methyltetrahydropteroyltri-L-glutamate site. Residues 460–462 (IGS) and glutamate 513 each bind L-homocysteine. L-methionine is bound by residues 460–462 (IGS) and glutamate 513. Tryptophan 590 lines the 5-methyltetrahydropteroyltri-L-glutamate pocket. Residue aspartate 628 coordinates L-homocysteine. Aspartate 628 lines the L-methionine pocket. 5-methyltetrahydropteroyltri-L-glutamate is bound at residue glutamate 634. Zn(2+) contacts are provided by histidine 670, cysteine 672, and glutamate 694. The Proton donor role is filled by histidine 723. Cysteine 755 contributes to the Zn(2+) binding site.

Belongs to the vitamin-B12 independent methionine synthase family. It depends on Zn(2+) as a cofactor.

It carries out the reaction 5-methyltetrahydropteroyltri-L-glutamate + L-homocysteine = tetrahydropteroyltri-L-glutamate + L-methionine. The protein operates within amino-acid biosynthesis; L-methionine biosynthesis via de novo pathway; L-methionine from L-homocysteine (MetE route): step 1/1. Functionally, catalyzes the transfer of a methyl group from 5-methyltetrahydrofolate to homocysteine resulting in methionine formation. The sequence is that of 5-methyltetrahydropteroyltriglutamate--homocysteine methyltransferase from Acidithiobacillus ferrooxidans (strain ATCC 23270 / DSM 14882 / CIP 104768 / NCIMB 8455) (Ferrobacillus ferrooxidans (strain ATCC 23270)).